The primary structure comprises 478 residues: Putative multidrug resistance outer membrane protein MdtQ (478 aa).

The first 21 residues, 1–21 (MNRDSFYPAIACFPLLLMLAG), serve as a signal peptide directing secretion. A lipid anchor (N-palmitoyl cysteine) is attached at C22. A lipid anchor (S-diacylglycerol cysteine) is attached at C22.

It belongs to the outer membrane factor (OMF) (TC 1.B.17) family.

It is found in the cell outer membrane. Its function is as follows. Could be involved in resistance to puromycin, acriflavine and tetraphenylarsonium chloride. In Shigella flexneri, this protein is Putative multidrug resistance outer membrane protein MdtQ (mdtQ).